The chain runs to 546 residues: Glucose-6-phosphate isomerase (546 aa).

The active-site Proton donor is Glu358. Active-site residues include His389 and Lys504.

The protein belongs to the GPI family.

The protein resides in the cytoplasm. The enzyme catalyses alpha-D-glucose 6-phosphate = beta-D-fructose 6-phosphate. Its pathway is carbohydrate biosynthesis; gluconeogenesis. It functions in the pathway carbohydrate degradation; glycolysis; D-glyceraldehyde 3-phosphate and glycerone phosphate from D-glucose: step 2/4. In terms of biological role, catalyzes the reversible isomerization of glucose-6-phosphate to fructose-6-phosphate. This Desulfosudis oleivorans (strain DSM 6200 / JCM 39069 / Hxd3) (Desulfococcus oleovorans) protein is Glucose-6-phosphate isomerase.